The sequence spans 218 residues: Hypoxanthine-guanine phosphoribosyltransferase (218 aa).

Lys-69 contributes to the GMP binding site. Position 103 is an N6-acetyllysine (Lys-103). A Glycyl lysine isopeptide (Lys-Gly) (interchain with G-Cter in SUMO1); alternate cross-link involves residue Lys-115. Lys-115 is covalently cross-linked (Glycyl lysine isopeptide (Lys-Gly) (interchain with G-Cter in SUMO2); alternate). GMP is bound by residues 134 to 142, Lys-166, 186 to 188, and Asp-194; these read EDIIDTGKT and KFV. The active-site Proton acceptor is the Asp-138. Thr-142 is subject to Phosphothreonine. Asp-194 provides a ligand contact to Mg(2+).

It belongs to the purine/pyrimidine phosphoribosyltransferase family. In terms of assembly, homotetramer. Requires Mg(2+) as cofactor.

The protein localises to the cytoplasm. It catalyses the reaction IMP + diphosphate = hypoxanthine + 5-phospho-alpha-D-ribose 1-diphosphate. The catalysed reaction is GMP + diphosphate = guanine + 5-phospho-alpha-D-ribose 1-diphosphate. It participates in purine metabolism; IMP biosynthesis via salvage pathway; IMP from hypoxanthine: step 1/1. Converts guanine to guanosine monophosphate, and hypoxanthine to inosine monophosphate. Transfers the 5-phosphoribosyl group from 5-phosphoribosylpyrophosphate onto the purine. Plays a central role in the generation of purine nucleotides through the purine salvage pathway. The polypeptide is Hypoxanthine-guanine phosphoribosyltransferase (Hprt1) (Rattus norvegicus (Rat)).